A 725-amino-acid polypeptide reads, in one-letter code: Polyribonucleotide nucleotidyltransferase (725 aa).

Asp506 and Asp512 together coordinate Mg(2+). Residues 571–631 (PLIEQFAIDP…QNIIDACEHI (61 aa)) form the KH domain. The S1 motif domain occupies 657–724 (DEVVIGKVER…KKDRIELSSA (68 aa)).

This sequence belongs to the polyribonucleotide nucleotidyltransferase family. Mg(2+) is required as a cofactor.

It is found in the cytoplasm. The catalysed reaction is RNA(n+1) + phosphate = RNA(n) + a ribonucleoside 5'-diphosphate. Involved in mRNA degradation. Catalyzes the phosphorolysis of single-stranded polyribonucleotides processively in the 3'- to 5'-direction. This chain is Polyribonucleotide nucleotidyltransferase, found in Aliarcobacter butzleri (strain RM4018) (Arcobacter butzleri).